Consider the following 127-residue polypeptide: Large ribosomal subunit protein bL17 (127 aa).

The protein belongs to the bacterial ribosomal protein bL17 family. Part of the 50S ribosomal subunit. Contacts protein L32.

The protein is Large ribosomal subunit protein bL17 of Haemophilus ducreyi (strain 35000HP / ATCC 700724).